A 146-amino-acid polypeptide reads, in one-letter code: UPF0260 protein Swoo_2117 (146 aa).

The protein belongs to the UPF0260 family.

This chain is UPF0260 protein Swoo_2117, found in Shewanella woodyi (strain ATCC 51908 / MS32).